A 395-amino-acid chain; its full sequence is ADP-ribosylation factor-like protein 13A (395 aa).

GTP contacts are provided by residues 28–35, 71–75, and 130–133; these read GLDNSGKS, DLTGD, and NKQD.

It belongs to the small GTPase superfamily. Arf family.

The protein is ADP-ribosylation factor-like protein 13A (Arl13a) of Rattus norvegicus (Rat).